A 74-amino-acid chain; its full sequence is Ubiquitin-like protein FUBI (74 aa).

This sequence belongs to the ubiquitin family.

The sequence is that of Ubiquitin-like protein FUBI (Fau) from Mus spicilegus (Steppe mouse).